Here is an 878-residue protein sequence, read N- to C-terminus: Protein argonaute 6 (878 aa).

Over residues 1–17 (METSSSLPLSPISIEPE) the composition is skewed to low complexity. The disordered stretch occupies residues 1–25 (METSSSLPLSPISIEPEQPSHRDYD). One can recognise a PAZ domain in the interval 259–372 (PVIEFLKANQ…LPLEFCNLVS (114 aa)). The Piwi domain maps to 541-851 (FILCILPERK…AAAQVAQFTK (311 aa)).

It belongs to the argonaute family. Ago subfamily. In terms of tissue distribution, expressed in roots, cotyledons and shoot meristematic region.

Its subcellular location is the nucleus. In terms of biological role, involved in transcriptional gene silencing (TGS). Component of the RISC complex that associate with the small interfering RNA (siRNA) pathway involved in direct cytosine methylation at endogenous DNA repeats. Required for the accumulation of specific siRNAs derived from transgene and heterochromatin-related endogenous loci. Involved in RNA-directed DNA methylation (RdDM) at specific endogenous loci. Probably not required for the accumulation of siRNAs derived from transgene inverted repeats that induce post-transcriptional gene silencing (PTGS). Associates mainly with small RNAs of 24 nucleotide in length and preferentially recruits small RNAs with a 5' terminal adenosine. Targeted by turnip yellows virus (TuYV) protein P0 (via F-box-like domain) for probable proteasome degradation and thereby inactivating AGO6 function in RNA silencing. This chain is Protein argonaute 6 (AGO6), found in Arabidopsis thaliana (Mouse-ear cress).